Reading from the N-terminus, the 308-residue chain is Glutaminase (308 aa).

Substrate is bound by residues Ser66, Asn117, Glu161, Asn168, Tyr192, Tyr244, and Val262.

The protein belongs to the glutaminase family. In terms of assembly, homotetramer.

It carries out the reaction L-glutamine + H2O = L-glutamate + NH4(+). The polypeptide is Glutaminase (Enterobacter sp. (strain 638)).